A 414-amino-acid polypeptide reads, in one-letter code: Ribulose bisphosphate carboxylase large chain (414 aa).

Substrate is bound by residues asparagine 100 and threonine 150. Lysine 152 acts as the Proton acceptor in catalysis. Lysine 154 contacts substrate. Residues lysine 178, aspartate 180, and glutamate 181 each coordinate Mg(2+). Lysine 178 carries the N6-carboxylysine modification. Histidine 271 serves as the catalytic Proton acceptor. The substrate site is built by arginine 272, histidine 304, and serine 356.

Belongs to the RuBisCO large chain family. Type I subfamily. As to quaternary structure, heterohexadecamer of 8 large chains and 8 small chains; disulfide-linked. The disulfide link is formed within the large subunit homodimers. It depends on Mg(2+) as a cofactor. The disulfide bond which can form in the large chain dimeric partners within the hexadecamer appears to be associated with oxidative stress and protein turnover.

The protein localises to the plastid. It localises to the chloroplast. It catalyses the reaction 2 (2R)-3-phosphoglycerate + 2 H(+) = D-ribulose 1,5-bisphosphate + CO2 + H2O. The enzyme catalyses D-ribulose 1,5-bisphosphate + O2 = 2-phosphoglycolate + (2R)-3-phosphoglycerate + 2 H(+). Its function is as follows. RuBisCO catalyzes two reactions: the carboxylation of D-ribulose 1,5-bisphosphate, the primary event in carbon dioxide fixation, as well as the oxidative fragmentation of the pentose substrate in the photorespiration process. Both reactions occur simultaneously and in competition at the same active site. This chain is Ribulose bisphosphate carboxylase large chain (rbcL), found in Blechnopsis orientalis (Fish fern).